The sequence spans 901 residues: Vacuolar protein sorting-associated protein 41 homolog (901 aa).

Positions 1–37 (MDETHENEASDSFDPVFENSYHDDVTFNTEDDDEPPL) are disordered. One copy of the CHCR repeat lies at 618-760 (LRLLLDNADS…VAEFPAHFSQ (143 aa)). An RING-type; atypical zinc finger spans residues 839–893 (CSLCAQIIINSNQETTKKFSDIKVFKCGHIFHLACSTSEMERRQSIEEGLCIACS).

Belongs to the VPS41 family. In terms of assembly, probable component of the homotypic fusion and vacuole protein sorting (HOPS) complex consisting of the core class C Vps proteins vps-11, vps-16, vps-18, and which further associates with vps-33.1, vps-39 and vps-41.

Its subcellular location is the endosome membrane. It localises to the late endosome membrane. The protein localises to the early endosome membrane. It is found in the lysosome membrane. The protein resides in the golgi apparatus. Its subcellular location is the trans-Golgi network. It localises to the cytoplasmic vesicle. The protein localises to the clathrin-coated vesicle. It is found in the cytoplasm. The protein resides in the cytosol. Its function is as follows. Plays a role in vesicle-mediated protein trafficking to lysosomal compartments including the endocytic membrane transport pathways. Believed to act in part as a core component of the putative HOPS endosomal tethering complex which is proposed to be involved in the rab-5-to-rab-7 endosome conversion probably implicating sand-1, and via binding SNAREs and SNARE complexes to mediate tethering and docking events during SNARE-mediated membrane fusion. The HOPS complex is proposed to be recruited to rab-7 on the late endosomal membrane and to regulate late endocytic, phagocytic and autophagic traffic towards lysosomes. Within the HOPS complex, contributes to the normal development of gut granules in the adult intestine. May mediate the tethering of autophagosomes with lysosomes. Has a role in the negative regulation of apoptosis. Required for uptake of exogenous dsRNA which is used in experimental RNA silencing. The sequence is that of Vacuolar protein sorting-associated protein 41 homolog from Caenorhabditis elegans.